A 119-amino-acid polypeptide reads, in one-letter code: uncharacterized protein (119 aa).

The protein resides in the mitochondrion. This is an uncharacterized protein from Arabidopsis thaliana (Mouse-ear cress).